Consider the following 414-residue polypeptide: Putative dipeptidase ARB_02715 (414 aa).

An N-terminal signal peptide occupies residues 1 to 20 (MAALFVSLLALTSLVPVQGA). Positions 45, 47, and 157 each coordinate Zn(2+). The cysteines at positions 96 and 186 are disulfide-linked. H184 is a substrate binding site. The Zn(2+) site is built by H228 and H249. The substrate site is built by R260 and D320. Residue N392 is glycosylated (N-linked (GlcNAc...) asparagine).

Belongs to the metallo-dependent hydrolases superfamily. Peptidase M19 family. Zn(2+) is required as a cofactor.

It catalyses the reaction an L-aminoacyl-L-amino acid + H2O = 2 an L-alpha-amino acid. In terms of biological role, hydrolyzes a wide range of dipeptides. The chain is Putative dipeptidase ARB_02715 from Arthroderma benhamiae (strain ATCC MYA-4681 / CBS 112371) (Trichophyton mentagrophytes).